The primary structure comprises 78 residues: Large ribosomal subunit protein bL28 (78 aa).

This sequence belongs to the bacterial ribosomal protein bL28 family.

This Rippkaea orientalis (strain PCC 8801 / RF-1) (Cyanothece sp. (strain PCC 8801)) protein is Large ribosomal subunit protein bL28.